Reading from the N-terminus, the 438-residue chain is Putative hydroxypyruvate reductase (438 aa).

The catalysed reaction is (R)-glycerate + NAD(+) = 3-hydroxypyruvate + NADH + H(+). It catalyses the reaction (R)-glycerate + NADP(+) = 3-hydroxypyruvate + NADPH + H(+). It participates in carbohydrate acid metabolism; tartrate degradation; 3-hydroxypyruvate from D-glycerate: step 1/1. Its function is as follows. Degrades an unidentified toxic product from the first step of tartrate degradation. The sequence is that of Putative hydroxypyruvate reductase (ttuD) from Agrobacterium vitis (Rhizobium vitis).